Consider the following 1364-residue polypeptide: DNA-directed RNA polymerase subunit beta' (1364 aa).

Positions 1-42 (MTSSSSKSNKSRKSSKAAKDTTPVHESASRPLSKTPPPFRNH) are disordered. Zn(2+)-binding residues include cysteine 250, cysteine 317, cysteine 324, and cysteine 327.

This sequence belongs to the RNA polymerase beta' chain family. RpoC2 subfamily. In terms of assembly, in cyanobacteria the RNAP catalytic core is composed of 2 alpha, 1 beta, 1 beta', 1 gamma and 1 omega subunit. When a sigma factor is associated with the core the holoenzyme is formed, which can initiate transcription. Zn(2+) is required as a cofactor.

It carries out the reaction RNA(n) + a ribonucleoside 5'-triphosphate = RNA(n+1) + diphosphate. In terms of biological role, DNA-dependent RNA polymerase catalyzes the transcription of DNA into RNA using the four ribonucleoside triphosphates as substrates. The protein is DNA-directed RNA polymerase subunit beta' of Parasynechococcus marenigrum (strain WH8102).